Consider the following 182-residue polypeptide: Protein GrpE (182 aa).

Residues 1 to 37 (MSDSSKERKKKFTGMVNKQKSEDQQNNSKQADDLDEL) are disordered.

The protein belongs to the GrpE family. In terms of assembly, homodimer.

It localises to the cytoplasm. In terms of biological role, participates actively in the response to hyperosmotic and heat shock by preventing the aggregation of stress-denatured proteins, in association with DnaK and GrpE. It is the nucleotide exchange factor for DnaK and may function as a thermosensor. Unfolded proteins bind initially to DnaJ; upon interaction with the DnaJ-bound protein, DnaK hydrolyzes its bound ATP, resulting in the formation of a stable complex. GrpE releases ADP from DnaK; ATP binding to DnaK triggers the release of the substrate protein, thus completing the reaction cycle. Several rounds of ATP-dependent interactions between DnaJ, DnaK and GrpE are required for fully efficient folding. In Wolbachia sp. subsp. Brugia malayi (strain TRS), this protein is Protein GrpE.